The sequence spans 323 residues: o-succinylbenzoate synthase (323 aa).

Residue Lys134 is the Proton donor of the active site. Mg(2+) is bound by residues Asp162, Glu191, and Asp214. The Proton acceptor role is filled by Lys236.

This sequence belongs to the mandelate racemase/muconate lactonizing enzyme family. MenC type 1 subfamily. It depends on a divalent metal cation as a cofactor.

The enzyme catalyses (1R,6R)-6-hydroxy-2-succinyl-cyclohexa-2,4-diene-1-carboxylate = 2-succinylbenzoate + H2O. Its pathway is quinol/quinone metabolism; 1,4-dihydroxy-2-naphthoate biosynthesis; 1,4-dihydroxy-2-naphthoate from chorismate: step 4/7. It participates in quinol/quinone metabolism; menaquinone biosynthesis. In terms of biological role, converts 2-succinyl-6-hydroxy-2,4-cyclohexadiene-1-carboxylate (SHCHC) to 2-succinylbenzoate (OSB). The protein is o-succinylbenzoate synthase of Yersinia enterocolitica serotype O:8 / biotype 1B (strain NCTC 13174 / 8081).